Consider the following 144-residue polypeptide: Large ribosomal subunit protein uL16 (144 aa).

Residues 1–16 (MLIPKRVKYRKQHRGR) are compositionally biased toward basic residues. The segment at 1–23 (MLIPKRVKYRKQHRGRPGGGMAK) is disordered.

The protein belongs to the universal ribosomal protein uL16 family. As to quaternary structure, part of the 50S ribosomal subunit.

In terms of biological role, binds 23S rRNA and is also seen to make contacts with the A and possibly P site tRNAs. The polypeptide is Large ribosomal subunit protein uL16 (Pelotomaculum thermopropionicum (strain DSM 13744 / JCM 10971 / SI)).